The sequence spans 218 residues: MPGLTIGDTVPNLELDSTHGKIRIHDYVGNGYVILFSHPGDFTPVCTTELAAMANYAKEFEKRGVKLLGISCDDVQSHKEWTKDIEAYKPGSKVTYPIMADPDRSAIKQLNMVDPDEKDAEGQLPSRTLHIVGPDKKVKLSFLYPSCTGRNMDEVVRAVDSLLTAAKHKVATPANWNPGECVVIAPGVSDDEAKKMFPQGFETADLPSKKGYLRFTKV.

The Thioredoxin domain occupies 4-164; that stretch reads LTIGDTVPNL…VVRAVDSLLT (161 aa). Catalysis depends on cysteine 46, which acts as the Cysteine sulfenic acid (-SOH) intermediate. The Bipartite nuclear localization signal signature appears at 194 to 217; it reads KKMFPQGFETADLPSKKGYLRFTK.

It belongs to the peroxiredoxin family. Prx6 subfamily.

The protein localises to the nucleus. The protein resides in the cytoplasm. The enzyme catalyses a hydroperoxide + [thioredoxin]-dithiol = an alcohol + [thioredoxin]-disulfide + H2O. Thiol-specific peroxidase that catalyzes the reduction of hydrogen peroxide and organic hydroperoxides to water and alcohols, respectively. Seems to contribute to the inhibition of germination during stress. The polypeptide is 1-Cys peroxiredoxin PER1 (PER1) (Triticum aestivum (Wheat)).